A 1104-amino-acid polypeptide reads, in one-letter code: Carbamoyl phosphate synthase large chain (1104 aa).

The interval 1–403 (MPRRQDIQKI…SFQKALRSLE (403 aa)) is carboxyphosphate synthetic domain. Residues Arg129, Arg170, Gly176, Gly177, Gln209, Leu211, Glu216, Gly242, Ile243, His244, Gln286, and Glu300 each coordinate ATP. Residues 133-329 (NEAMDKIGVK…IAKMAAKLAV (197 aa)) form the ATP-grasp 1 domain. Mg(2+)-binding residues include Gln286, Glu300, and Asn302. Mn(2+)-binding residues include Gln286, Glu300, and Asn302. The interval 404–552 (TGRAGWGCDK…YSTYEEETEV (149 aa)) is oligomerization domain. Positions 553 to 966 (IPASKPKVMI…AFAKAELGAG (414 aa)) are carbamoyl phosphate synthetic domain. Residues 703–900 (EKILQKLNIS…LAKLASLIMS (198 aa)) form the ATP-grasp 2 domain. ATP contacts are provided by Arg739, Lys778, Leu780, Glu785, Gly811, Ile812, His813, Ser814, Gln854, and Glu871. Mg(2+)-binding residues include Gln854, Glu871, and Asn873. The Mn(2+) site is built by Gln854, Glu871, and Asn873. Residues 967–1104 (ERLPLTGTVF…KTIQEYCPNF (138 aa)) enclose the MGS-like domain. An allosteric domain region spans residues 967-1104 (ERLPLTGTVF…KTIQEYCPNF (138 aa)).

This sequence belongs to the CarB family. As to quaternary structure, composed of two chains; the small (or glutamine) chain promotes the hydrolysis of glutamine to ammonia, which is used by the large (or ammonia) chain to synthesize carbamoyl phosphate. Tetramer of heterodimers (alpha,beta)4. Mg(2+) serves as cofactor. It depends on Mn(2+) as a cofactor.

The enzyme catalyses hydrogencarbonate + L-glutamine + 2 ATP + H2O = carbamoyl phosphate + L-glutamate + 2 ADP + phosphate + 2 H(+). It carries out the reaction hydrogencarbonate + NH4(+) + 2 ATP = carbamoyl phosphate + 2 ADP + phosphate + 2 H(+). Its pathway is amino-acid biosynthesis; L-arginine biosynthesis; carbamoyl phosphate from bicarbonate: step 1/1. It functions in the pathway pyrimidine metabolism; UMP biosynthesis via de novo pathway; (S)-dihydroorotate from bicarbonate: step 1/3. Functionally, large subunit of the glutamine-dependent carbamoyl phosphate synthetase (CPSase). CPSase catalyzes the formation of carbamoyl phosphate from the ammonia moiety of glutamine, carbonate, and phosphate donated by ATP, constituting the first step of 2 biosynthetic pathways, one leading to arginine and/or urea and the other to pyrimidine nucleotides. The large subunit (synthetase) binds the substrates ammonia (free or transferred from glutamine from the small subunit), hydrogencarbonate and ATP and carries out an ATP-coupled ligase reaction, activating hydrogencarbonate by forming carboxy phosphate which reacts with ammonia to form carbamoyl phosphate. This chain is Carbamoyl phosphate synthase large chain, found in Nostoc sp. (strain PCC 7120 / SAG 25.82 / UTEX 2576).